Reading from the N-terminus, the 225-residue chain is 2-C-methyl-D-erythritol 4-phosphate cytidylyltransferase (225 aa).

This sequence belongs to the IspD/TarI cytidylyltransferase family. IspD subfamily.

The catalysed reaction is 2-C-methyl-D-erythritol 4-phosphate + CTP + H(+) = 4-CDP-2-C-methyl-D-erythritol + diphosphate. Its pathway is isoprenoid biosynthesis; isopentenyl diphosphate biosynthesis via DXP pathway; isopentenyl diphosphate from 1-deoxy-D-xylulose 5-phosphate: step 2/6. Its function is as follows. Catalyzes the formation of 4-diphosphocytidyl-2-C-methyl-D-erythritol from CTP and 2-C-methyl-D-erythritol 4-phosphate (MEP). The sequence is that of 2-C-methyl-D-erythritol 4-phosphate cytidylyltransferase from Clostridium perfringens (strain SM101 / Type A).